Here is a 365-residue protein sequence, read N- to C-terminus: GTPase Obg (365 aa).

In terms of domain architecture, Obg spans 1 to 159 (MKFIDEARIE…RMLKLELKVL (159 aa)). Positions 160 to 334 (ADVGLLGMPN…LVYAIKDHLA (175 aa)) constitute an OBG-type G domain. Residues 166–173 (GMPNAGKS), 191–195 (FTTLH), 213–216 (DIPG), 284–287 (NKLD), and 315–317 (SAL) contribute to the GTP site. S173 and T193 together coordinate Mg(2+).

The protein belongs to the TRAFAC class OBG-HflX-like GTPase superfamily. OBG GTPase family. Monomer. The cofactor is Mg(2+).

The protein resides in the cytoplasm. Functionally, an essential GTPase which binds GTP, GDP and possibly (p)ppGpp with moderate affinity, with high nucleotide exchange rates and a fairly low GTP hydrolysis rate. Plays a role in control of the cell cycle, stress response, ribosome biogenesis and in those bacteria that undergo differentiation, in morphogenesis control. The sequence is that of GTPase Obg from Cupriavidus metallidurans (strain ATCC 43123 / DSM 2839 / NBRC 102507 / CH34) (Ralstonia metallidurans).